The primary structure comprises 432 residues: Dihydroorotase (432 aa).

Residues histidine 60 and histidine 62 each contribute to the Zn(2+) site. Residues 62–64 (HLR) and asparagine 94 contribute to the substrate site. Residues aspartate 152, histidine 179, and histidine 232 each coordinate Zn(2+). Asparagine 278 lines the substrate pocket. Aspartate 305 serves as a coordination point for Zn(2+). Aspartate 305 is an active-site residue. Residues histidine 309 and 323–324 (FG) contribute to the substrate site.

Belongs to the metallo-dependent hydrolases superfamily. DHOase family. Class I DHOase subfamily. Zn(2+) serves as cofactor.

The catalysed reaction is (S)-dihydroorotate + H2O = N-carbamoyl-L-aspartate + H(+). It functions in the pathway pyrimidine metabolism; UMP biosynthesis via de novo pathway; (S)-dihydroorotate from bicarbonate: step 3/3. Catalyzes the reversible cyclization of carbamoyl aspartate to dihydroorotate. This Elusimicrobium minutum (strain Pei191) protein is Dihydroorotase.